The sequence spans 218 residues: MPGRQRRDGGSGPAGQNGPNTGDNRGGGDRRGGGRDDRRGGQSAEKSNHIERVVTINRVSKVVKGGRRFSFTALVIVGDGNGLVGVGYGKAKEVPAAIQKGVEEARKSFFRVPMIGSTITHPVQGEAAAGVVMLRPASPGTGVIAGGAVRAVLECAGIHDILSKSLGSDNAINVVHATVAALKGLQRPEEVAARRGLALEDVAPAGMLRARAQAGSVK.

A disordered region spans residues 1-49 (MPGRQRRDGGSGPAGQNGPNTGDNRGGGDRRGGGRDDRRGGQSAEKSNH). The segment covering 26 to 49 (GGGDRRGGGRDDRRGGQSAEKSNH) has biased composition (basic and acidic residues). Residues 49–112 (HIERVVTINR…EEARKSFFRV (64 aa)) form the S5 DRBM domain.

The protein belongs to the universal ribosomal protein uS5 family. In terms of assembly, part of the 30S ribosomal subunit. Contacts proteins S4 and S8.

In terms of biological role, with S4 and S12 plays an important role in translational accuracy. Functionally, located at the back of the 30S subunit body where it stabilizes the conformation of the head with respect to the body. This chain is Small ribosomal subunit protein uS5, found in Rhodococcus jostii (strain RHA1).